The following is a 395-amino-acid chain: Elongation factor Tu (395 aa).

In terms of domain architecture, tr-type G spans K10 to E204. The interval G19–T26 is G1. G19 to T26 serves as a coordination point for GTP. A Mg(2+)-binding site is contributed by T26. Residues G60 to N64 form a G2 region. A G3 region spans residues D81–G84. GTP is bound by residues D81–H85 and N136–D139. The tract at residues N136–D139 is G4. The interval S174–L176 is G5.

The protein belongs to the TRAFAC class translation factor GTPase superfamily. Classic translation factor GTPase family. EF-Tu/EF-1A subfamily. Monomer.

The protein resides in the cytoplasm. The catalysed reaction is GTP + H2O = GDP + phosphate + H(+). Functionally, GTP hydrolase that promotes the GTP-dependent binding of aminoacyl-tRNA to the A-site of ribosomes during protein biosynthesis. This is Elongation factor Tu from Enterococcus faecalis (strain ATCC 700802 / V583).